A 123-amino-acid chain; its full sequence is Large ribosomal subunit protein uL29y (123 aa).

This sequence belongs to the universal ribosomal protein uL29 family.

In Arabidopsis thaliana (Mouse-ear cress), this protein is Large ribosomal subunit protein uL29y (RPL35B).